A 525-amino-acid chain; its full sequence is Ribosomal protein uS12 methylthiotransferase RimO (525 aa).

Residues 1 to 20 (MPKISTESVNTTIAPSQPAS) are compositionally biased toward polar residues. The disordered stretch occupies residues 1–44 (MPKISTESVNTTIAPSQPASTAPKDTATLFNPAKPTATPAQSSI). In terms of domain architecture, MTTase N-terminal spans 82–192 (PKIGFVSLGC…VIRAVALHVP (111 aa)). 6 residues coordinate [4Fe-4S] cluster: cysteine 91, cysteine 127, cysteine 156, cysteine 230, cysteine 234, and cysteine 237. The Radical SAM core domain occupies 216–453 (LTPSHYAYLK…MTLQQDISAQ (238 aa)). Positions 456-525 (QEKIGKTLMV…EYDLFASYQA (70 aa)) constitute a TRAM domain.

Belongs to the methylthiotransferase family. RimO subfamily. [4Fe-4S] cluster serves as cofactor.

It is found in the cytoplasm. It carries out the reaction L-aspartate(89)-[ribosomal protein uS12]-hydrogen + (sulfur carrier)-SH + AH2 + 2 S-adenosyl-L-methionine = 3-methylsulfanyl-L-aspartate(89)-[ribosomal protein uS12]-hydrogen + (sulfur carrier)-H + 5'-deoxyadenosine + L-methionine + A + S-adenosyl-L-homocysteine + 2 H(+). Catalyzes the methylthiolation of an aspartic acid residue of ribosomal protein uS12. The chain is Ribosomal protein uS12 methylthiotransferase RimO from Psychrobacter arcticus (strain DSM 17307 / VKM B-2377 / 273-4).